We begin with the raw amino-acid sequence, 597 residues long: Gigaxonin (597 aa).

Residues 30-99 enclose the BTB domain; it reads CDAHLVLDGE…IFSGQIRLNE (70 aa). Residues 134-236 form the BACK domain; it reads CIGIRDFALH…DSSYLREQML (103 aa). Kelch repeat units follow at residues 274–326, 327–374, 376–421, 422–468, 470–522, and 528–574; these read CIVT…SAEG, FLFV…EIDG, LYIL…AMKK, KIYA…GVAM, LYVF…VYGA, and SIYV…AALR.

As to quaternary structure, interacts with TBCB. Interacts with CUL3. Part of a complex that contains CUL3, RBX1 and GAN. Interacts (via BTB domain) with UBA1. Interacts (via Kelch domains) with MAP1B (via C-terminus) and MAP1S (via C-terminus). Post-translationally, ubiquitinated by E3 ubiquitin ligase complex formed by CUL3 and RBX1 and probably targeted for proteasome-independent degradation. Expressed in brain, heart and muscle (at protein level).

Its subcellular location is the cytoplasm. The protein localises to the cytoskeleton. The protein operates within protein modification; protein ubiquitination. Probable cytoskeletal component that directly or indirectly plays an important role in neurofilament architecture. May act as a substrate-specific adapter of an E3 ubiquitin-protein ligase complex which mediates the ubiquitination and subsequent proteasomal degradation of target proteins. Controls degradation of TBCB. Controls degradation of MAP1B and MAP1S, and is critical for neuronal maintenance and survival. In Mus musculus (Mouse), this protein is Gigaxonin.